Consider the following 303-residue polypeptide: Ribonuclease P protein subunit p40 (303 aa).

In terms of assembly, component of nuclear RNase P and RNase MRP ribonucleoproteins. RNase P consists of a catalytic RNA moiety and about 10 protein subunits; POP1, POP4, POP5, POP7, RPP14, RPP21, RPP25, RPP30, RPP38 and RPP40. Within the RNase P complex, POP1, POP7 and RPP25 form the 'finger' subcomplex, POP5, RPP14, RPP40 and homodimeric RPP30 form the 'palm' subcomplex, and RPP21, POP4 and RPP38 form the 'wrist' subcomplex. All subunits of the RNase P complex interact with the catalytic RNA. Several subunits of RNase P are also part of the RNase MRP complex. RNase MRP consists of a catalytic RNA moiety and about 8 protein subunits; POP1, POP7, RPP25, RPP30, RPP38, RPP40 and possibly also POP4 and POP5.

It localises to the nucleus. The protein localises to the nucleolus. In terms of biological role, component of ribonuclease P, a ribonucleoprotein complex that generates mature tRNA molecules by cleaving their 5'-ends. Also a component of the MRP ribonuclease complex, which cleaves pre-rRNA sequences. This chain is Ribonuclease P protein subunit p40 (RPP40), found in Bos taurus (Bovine).